The primary structure comprises 232 residues: Large ribosomal subunit protein uL1 (232 aa).

This sequence belongs to the universal ribosomal protein uL1 family. As to quaternary structure, part of the 50S ribosomal subunit.

Binds directly to 23S rRNA. The L1 stalk is quite mobile in the ribosome, and is involved in E site tRNA release. In terms of biological role, protein L1 is also a translational repressor protein, it controls the translation of the L11 operon by binding to its mRNA. In Xylella fastidiosa (strain M23), this protein is Large ribosomal subunit protein uL1.